A 950-amino-acid polypeptide reads, in one-letter code: UPF0182 protein P9303_14611 (950 aa).

Helical transmembrane passes span 20-40 (LLLSIAAFWLLMRVQVEWLWF), 53-73 (WLWQLGGLLLALLVVATCQLW), 102-122 (LLGCFVVVVGDLVLLTRLAWL), 141-161 (IWALVIPLSCVFISICVMLGN), 173-193 (CFCFSISIARGWGLWSLALAI), 209-229 (FGLGQFPALAFALVVLLAQLV), 259-279 (CDVMRPLIGIILLTLSALLWL), 308-328 (SLASLAILVLAFLVIPFPWIQ), and 335-355 (LIASIIGVGAILLEVLLAPFV).

It belongs to the UPF0182 family.

The protein resides in the cell membrane. The sequence is that of UPF0182 protein P9303_14611 from Prochlorococcus marinus (strain MIT 9303).